We begin with the raw amino-acid sequence, 62 residues long: Large ribosomal subunit protein bL33 (62 aa).

It belongs to the bacterial ribosomal protein bL33 family.

This is Large ribosomal subunit protein bL33 from Bacteroides fragilis (strain ATCC 25285 / DSM 2151 / CCUG 4856 / JCM 11019 / LMG 10263 / NCTC 9343 / Onslow / VPI 2553 / EN-2).